The chain runs to 325 residues: NADH-quinone oxidoreductase subunit H (325 aa).

The next 8 helical transmembrane spans lie at 11-31 (VLIA…CGAL), 81-101 (MIFT…FAIV), 114-134 (IGIL…LFAG), 149-169 (ASAQ…GVVA), 186-206 (MWNV…GVAV), 237-257 (FFVG…TMFF), 265-285 (LPPF…FILI), and 304-324 (ICLP…LYNA).

This sequence belongs to the complex I subunit 1 family. NDH-1 is composed of 13 different subunits. Subunits NuoA, H, J, K, L, M, N constitute the membrane sector of the complex.

It is found in the cell inner membrane. It catalyses the reaction a quinone + NADH + 5 H(+)(in) = a quinol + NAD(+) + 4 H(+)(out). In terms of biological role, NDH-1 shuttles electrons from NADH, via FMN and iron-sulfur (Fe-S) centers, to quinones in the respiratory chain. The immediate electron acceptor for the enzyme in this species is believed to be ubiquinone. Couples the redox reaction to proton translocation (for every two electrons transferred, four hydrogen ions are translocated across the cytoplasmic membrane), and thus conserves the redox energy in a proton gradient. This subunit may bind ubiquinone. This Photorhabdus laumondii subsp. laumondii (strain DSM 15139 / CIP 105565 / TT01) (Photorhabdus luminescens subsp. laumondii) protein is NADH-quinone oxidoreductase subunit H.